Consider the following 127-residue polypeptide: Protein pkiA (127 aa).

The HIT domain occupies 16–127; the sequence is IFAKIISGAI…GGRQMNWPPG (112 aa).

This chain is Protein pkiA (pkiA), found in Dictyostelium discoideum (Social amoeba).